The sequence spans 420 residues: Glutamate-1-semialdehyde 2,1-aminomutase (420 aa).

At Lys259 the chain carries N6-(pyridoxal phosphate)lysine.

This sequence belongs to the class-III pyridoxal-phosphate-dependent aminotransferase family. HemL subfamily. Pyridoxal 5'-phosphate is required as a cofactor.

The protein resides in the cytoplasm. It catalyses the reaction (S)-4-amino-5-oxopentanoate = 5-aminolevulinate. It participates in porphyrin-containing compound metabolism; protoporphyrin-IX biosynthesis; 5-aminolevulinate from L-glutamyl-tRNA(Glu): step 2/2. This chain is Glutamate-1-semialdehyde 2,1-aminomutase, found in Sulfolobus acidocaldarius (strain ATCC 33909 / DSM 639 / JCM 8929 / NBRC 15157 / NCIMB 11770).